A 427-amino-acid chain; its full sequence is Histidine--tRNA ligase (427 aa).

This sequence belongs to the class-II aminoacyl-tRNA synthetase family. Homodimer.

The protein localises to the cytoplasm. It catalyses the reaction tRNA(His) + L-histidine + ATP = L-histidyl-tRNA(His) + AMP + diphosphate + H(+). In Aster yellows witches'-broom phytoplasma (strain AYWB), this protein is Histidine--tRNA ligase.